A 444-amino-acid polypeptide reads, in one-letter code: MKVLLIGGGAREHAIAMALKKNELVELYTLMKNKNPGIYAISDEVSFNSETDVPAIKEFAEKIKPELAVIGPEAPLGVGAADLLIEMGIPTVGPKKLPAQIETSKEFMRNLFKKYEIDGSLRYAAFNEYGNDLETFIDEMTSLGKDVVVKPAGLTGGKGVKVVGEQLKDNEEAKIYAKEVFDKSIGGGNIIIEEKLVGVEFTLHGFVDGENIVFMPAVQDHPHAYNNDEGPITGGMGSYSCPNHGLPFLSAEMLDRAEKIMEKTVSSINSEVGPYNGFLYGQFMLTADGPKIIEYNARFGDPEAMNLLPILKTDFLDVCFAIAEGKLDKINLEFENKATVCKYVVPNGYPIDPVRNKELTVDEKAIENADAILFYASINEKNGKLYITGSRSAAVVGISENIEEAEKIAQMAIENFKGEVYYRSDIGTLGLIKKRIERVKQLAK.

In terms of domain architecture, ATP-grasp spans 109-324 (RNLFKKYEID…FLDVCFAIAE (216 aa)). 140–202 (MTSLGKDVVV…EEKLVGVEFT (63 aa)) provides a ligand contact to ATP. Mg(2+) contacts are provided by glutamine 282, glutamate 294, and asparagine 296. Positions 282, 294, and 296 each coordinate Mn(2+).

The protein belongs to the GARS family. Mg(2+) is required as a cofactor. It depends on Mn(2+) as a cofactor.

The enzyme catalyses 5-phospho-beta-D-ribosylamine + glycine + ATP = N(1)-(5-phospho-beta-D-ribosyl)glycinamide + ADP + phosphate + H(+). Its pathway is purine metabolism; IMP biosynthesis via de novo pathway; N(1)-(5-phospho-D-ribosyl)glycinamide from 5-phospho-alpha-D-ribose 1-diphosphate: step 2/2. This chain is Phosphoribosylamine--glycine ligase, found in Methanococcus maripaludis (strain C5 / ATCC BAA-1333).